The sequence spans 620 residues: Chaperone protein HtpG (620 aa).

The segment at Met1–Arg339 is a; substrate-binding. Residues Glu340–Ala546 are b. Positions Met547–Leu620 are c.

The protein belongs to the heat shock protein 90 family. In terms of assembly, homodimer.

The protein resides in the cytoplasm. Its function is as follows. Molecular chaperone. Has ATPase activity. The chain is Chaperone protein HtpG from Sulfurovum sp. (strain NBC37-1).